The primary structure comprises 413 residues: L-cysteine:1D-myo-inositol 2-amino-2-deoxy-alpha-D-glucopyranoside ligase (413 aa).

Cys-43 serves as a coordination point for Zn(2+). L-cysteinyl-5'-AMP-binding positions include 43 to 46, Thr-58, and 81 to 83; these read CGIT and NIT. Positions 45 to 55 match the 'HIGH' region motif; it reads ITPYDATHLGH. Residues 187 to 192 carry the 'ERGGDP' region motif; the sequence is ERGGDP. Trp-227 contributes to the L-cysteinyl-5'-AMP binding site. A Zn(2+)-binding site is contributed by Cys-231. 249–251 contacts L-cysteinyl-5'-AMP; it reads GND. His-256 lines the Zn(2+) pocket. Val-283 provides a ligand contact to L-cysteinyl-5'-AMP. The 'KMSKS' region signature appears at 289-293; it reads KMSKS.

Belongs to the class-I aminoacyl-tRNA synthetase family. MshC subfamily. As to quaternary structure, monomer. It depends on Zn(2+) as a cofactor.

It catalyses the reaction 1D-myo-inositol 2-amino-2-deoxy-alpha-D-glucopyranoside + L-cysteine + ATP = 1D-myo-inositol 2-(L-cysteinylamino)-2-deoxy-alpha-D-glucopyranoside + AMP + diphosphate + H(+). In terms of biological role, catalyzes the ATP-dependent condensation of GlcN-Ins and L-cysteine to form L-Cys-GlcN-Ins. The protein is L-cysteine:1D-myo-inositol 2-amino-2-deoxy-alpha-D-glucopyranoside ligase of Gordonia bronchialis (strain ATCC 25592 / DSM 43247 / BCRC 13721 / JCM 3198 / KCTC 3076 / NBRC 16047 / NCTC 10667) (Rhodococcus bronchialis).